The primary structure comprises 438 residues: Phosphoribosylamine--glycine ligase (438 aa).

One can recognise an ATP-grasp domain in the interval 108–316 (RTFMERNEIP…LLEVAEGIVD (209 aa)). 135 to 194 (VDDFGRPVVVKPIGLTGGKGVKVVGYQLRDNEEAKSYAEELIRRDGRVLIEERTNGVEFT) serves as a coordination point for ATP. Mg(2+)-binding residues include Gln-274, Glu-286, and Asn-288. Gln-274, Glu-286, and Asn-288 together coordinate Mn(2+).

This sequence belongs to the GARS family. Mg(2+) is required as a cofactor. Requires Mn(2+) as cofactor.

The catalysed reaction is 5-phospho-beta-D-ribosylamine + glycine + ATP = N(1)-(5-phospho-beta-D-ribosyl)glycinamide + ADP + phosphate + H(+). The protein operates within purine metabolism; IMP biosynthesis via de novo pathway; N(1)-(5-phospho-D-ribosyl)glycinamide from 5-phospho-alpha-D-ribose 1-diphosphate: step 2/2. This chain is Phosphoribosylamine--glycine ligase, found in Thermococcus gammatolerans (strain DSM 15229 / JCM 11827 / EJ3).